A 371-amino-acid polypeptide reads, in one-letter code: tRNA-specific 2-thiouridylase MnmA (371 aa).

ATP contacts are provided by residues 14–21 (GMSGGVDS) and methionine 40. An interaction with target base in tRNA region spans residues 100–102 (NPD). Cysteine 105 functions as the Nucleophile in the catalytic mechanism. Cysteine 105 and cysteine 205 are oxidised to a cystine. Glycine 129 provides a ligand contact to ATP. The interval 155–157 (KDQ) is interaction with tRNA. Catalysis depends on cysteine 205, which acts as the Cysteine persulfide intermediate. The interval 321–322 (RY) is interaction with tRNA.

Belongs to the MnmA/TRMU family.

It is found in the cytoplasm. It catalyses the reaction S-sulfanyl-L-cysteinyl-[protein] + uridine(34) in tRNA + AH2 + ATP = 2-thiouridine(34) in tRNA + L-cysteinyl-[protein] + A + AMP + diphosphate + H(+). Catalyzes the 2-thiolation of uridine at the wobble position (U34) of tRNA, leading to the formation of s(2)U34. This Bordetella pertussis (strain Tohama I / ATCC BAA-589 / NCTC 13251) protein is tRNA-specific 2-thiouridylase MnmA.